We begin with the raw amino-acid sequence, 645 residues long: Beta-galactosidase BgaA (645 aa).

Arg102 contacts substrate. Residue Cys106 participates in Zn(2+) binding. A substrate-binding site is contributed by Asn140. Catalysis depends on Glu141, which acts as the Proton donor. Residues Cys150, Cys152, and Cys155 each coordinate Zn(2+). The active-site Nucleophile is Glu312. Substrate-binding positions include Trp320 and 360 to 363 (EQMH).

Belongs to the glycosyl hydrolase 42 family.

It catalyses the reaction Hydrolysis of terminal non-reducing beta-D-galactose residues in beta-D-galactosides.. In terms of biological role, hydrolyzes chromogen 5-bromo-4-chloro-3-indolyl-beta-D-galactopyranoside (X-Gal) and p-nitrophenyl-beta-D-galactoside (pNPGal). The polypeptide is Beta-galactosidase BgaA (Thermus sp).